Reading from the N-terminus, the 167-residue chain is Claudin domain-containing protein 2 (167 aa).

Helical transmembrane passes span Leu-13 to Thr-32, Val-61 to Ile-81, Thr-96 to Ser-116, and Tyr-130 to Ala-150.

It belongs to the PMP-22/EMP/MP20 family.

Its subcellular location is the membrane. The chain is Claudin domain-containing protein 2 (Cldnd2) from Mus musculus (Mouse).